The primary structure comprises 662 residues: Glycine--tRNA ligase beta subunit (662 aa).

Belongs to the class-II aminoacyl-tRNA synthetase family. Tetramer of two alpha and two beta subunits.

It localises to the cytoplasm. It carries out the reaction tRNA(Gly) + glycine + ATP = glycyl-tRNA(Gly) + AMP + diphosphate. This Rickettsia akari (strain Hartford) protein is Glycine--tRNA ligase beta subunit.